We begin with the raw amino-acid sequence, 365 residues long: Histidinol-phosphate aminotransferase (365 aa).

K227 carries the N6-(pyridoxal phosphate)lysine modification.

Belongs to the class-II pyridoxal-phosphate-dependent aminotransferase family. Histidinol-phosphate aminotransferase subfamily. As to quaternary structure, homodimer. It depends on pyridoxal 5'-phosphate as a cofactor.

It carries out the reaction L-histidinol phosphate + 2-oxoglutarate = 3-(imidazol-4-yl)-2-oxopropyl phosphate + L-glutamate. Its pathway is amino-acid biosynthesis; L-histidine biosynthesis; L-histidine from 5-phospho-alpha-D-ribose 1-diphosphate: step 7/9. The sequence is that of Histidinol-phosphate aminotransferase from Polaromonas naphthalenivorans (strain CJ2).